The primary structure comprises 194 residues: Protein DROOPING LEAF (194 aa).

The segment at 15-42 adopts a C4-type zinc-finger fold; that stretch reads CTYCNTVLAVGVPCKRLMDTVTVKCGHC. Residues 83 to 103 form a disordered region; sequence LVSPTSNEGSPRAPFVVKPPE.

This sequence belongs to the YABBY family.

Its subcellular location is the nucleus. Its function is as follows. Regulates carpel specification in flower development. Severe or intermediate mutation in DL causes complete or partial homeotic conversion of carpels into stamens without affecting the identities of other floral organs. Interacts antagonistically with class B genes and controls floral meristem determinacy. Regulates midrib formation in leaves probably by inducing cell proliferation in the central region of the leaf. This Oryza sativa subsp. japonica (Rice) protein is Protein DROOPING LEAF (DL).